We begin with the raw amino-acid sequence, 279 residues long: MLRVIGLGAVGSLFTYFLNRAGVVPEVVQRRRCGEFLFCVEGDCEKLKFREGGAADDVGYTIVAVKAYDSRSVVPHLKGVAVVAQNGIGGYEEIKEAYPNSVPAVVTYGVYREGCRAELRGVGEIYLPSAVSTLAELLERGGGRVRLVEDIEPYRWLKLAVNAAINAITALLQAPNGVIISSPYAQTLALEVAQEVLNVATALGVKMPRNPVEEVLRVASATAKNLSSTARDVAACAKTEIDYINGAVVKYGEALGVATPVNKALFNLIKARESLCNSG.

Residues 6 to 11 (GLGAVG), K66, and N86 each bind NADP(+). The Proton donor role is filled by K158. Substrate contacts are provided by residues K158, N162, N166, N176, and 225–228 (NLSS). E240 provides a ligand contact to NADP(+).

The protein belongs to the ketopantoate reductase family.

It is found in the cytoplasm. It carries out the reaction (R)-pantoate + NAD(+) = 2-dehydropantoate + NADH + H(+). The catalysed reaction is (R)-pantoate + NADP(+) = 2-dehydropantoate + NADPH + H(+). It functions in the pathway cofactor biosynthesis; coenzyme A biosynthesis. Its function is as follows. Catalyzes the NAD(P)H-dependent reduction of ketopantoate into pantoic acid. This Pyrobaculum aerophilum (strain ATCC 51768 / DSM 7523 / JCM 9630 / CIP 104966 / NBRC 100827 / IM2) protein is 2-dehydropantoate 2-reductase.